Consider the following 347-residue polypeptide: Ribosomal RNA small subunit methyltransferase C (347 aa).

It belongs to the methyltransferase superfamily. RsmC family. As to quaternary structure, monomer.

It localises to the cytoplasm. The enzyme catalyses guanosine(1207) in 16S rRNA + S-adenosyl-L-methionine = N(2)-methylguanosine(1207) in 16S rRNA + S-adenosyl-L-homocysteine + H(+). Specifically methylates the guanine in position 1207 of 16S rRNA in the 30S particle. The sequence is that of Ribosomal RNA small subunit methyltransferase C from Shewanella baltica (strain OS155 / ATCC BAA-1091).